Reading from the N-terminus, the 85-residue chain is Oxytocin-neurophysin 1 (85 aa).

Gly3 carries the post-translational modification Glycine amide. 6 cysteine pairs are disulfide-bonded: Cys16–Cys60, Cys19–Cys33, Cys27–Cys50, Cys34–Cys40, Cys67–Cys79, and Cys80–Cys85.

This sequence belongs to the vasopressin/oxytocin family. Interacts with oxytocin receptor (Ki=1.5 nM). Interacts with vasopressin V1aR/AVPR1A (Ki=37 nM), V1bR/AVPR1B (Ki=222 nM), and V2R/AVPR2 receptors (Ki=823 nM).

Functionally, neurophysin 1 specifically binds oxytocin. Its function is as follows. Oxytocin causes contraction of the smooth muscle of the uterus and of the mammary gland. Acts by binding to oxytocin receptor (OXTR). This chain is Oxytocin-neurophysin 1 (OXT), found in Papio hamadryas (Hamadryas baboon).